The sequence spans 177 residues: MSRVAKAPVTVPAGVEVTLNEQTLTVKGSKGSLTRVINNAVNVVIEDAQVKFLPVDGVSNAWAQAGTARALVNNMVVGVSQGFVKKLKLVGVGYRAKIAGSDLDLTLGFSHPLVHKLPAGVTAECPSQTEIVLSGVDKQVVGQVAAEIRGYRPPEPYKGKGVRYDDEIVRRKEAKKK.

It belongs to the universal ribosomal protein uL6 family. As to quaternary structure, part of the 50S ribosomal subunit.

Its function is as follows. This protein binds to the 23S rRNA, and is important in its secondary structure. It is located near the subunit interface in the base of the L7/L12 stalk, and near the tRNA binding site of the peptidyltransferase center. This chain is Large ribosomal subunit protein uL6, found in Shewanella frigidimarina (strain NCIMB 400).